The primary structure comprises 317 residues: Universal stress protein MT2052 (317 aa).

ATP contacts are provided by residues G13, 128–134 (GYRGQGA), 142–143 (SV), G175, D208, 277–283 (GSHGRGG), and 291–293 (SVS).

This sequence belongs to the universal stress protein A family.

The chain is Universal stress protein MT2052 from Mycobacterium tuberculosis (strain CDC 1551 / Oshkosh).